The sequence spans 230 residues: uncharacterized protein (230 aa).

This is an uncharacterized protein from Acanthamoeba polyphaga (Amoeba).